We begin with the raw amino-acid sequence, 217 residues long: Vesicle transport through interaction with t-SNAREs homolog 1A (217 aa).

Topologically, residues 1 to 192 (MDVFERTEQN…TGIARRLATN (192 aa)) are cytoplasmic. A coiled-coil region spans residues 36 to 97 (AVREVENDID…AQLQSSNQTN (62 aa)). The segment at 90 to 109 (LQSSNQTNSNPWSNAPDDYQ) is disordered. Residues 123–185 (SNMLDSTSDR…KSARKIMTGI (63 aa)) form the t-SNARE coiled-coil homology domain. A helical; Anchor for type IV membrane protein membrane pass occupies residues 193 to 213 (KVILSIIILLLMGIIALIICL). The Vesicular segment spans residues 214-217 (KWLR).

This sequence belongs to the VTI1 family. Component of the SNARE complex composed of syn7A, syn8A, vamp7A and vti1A.

It is found in the membrane. The protein localises to the cytoplasmic vesicle. Its subcellular location is the secretory vesicle membrane. The protein resides in the clathrin-coated vesicle membrane. It localises to the endosome membrane. It is found in the endoplasmic reticulum membrane. Functionally, V-SNARE that mediates vesicle transport pathways through interactions with t-SNAREs on the target membrane. These interactions are proposed to mediate aspects of the specificity of vesicle trafficking and to promote fusion of the lipid bilayers. The chain is Vesicle transport through interaction with t-SNAREs homolog 1A from Dictyostelium discoideum (Social amoeba).